We begin with the raw amino-acid sequence, 166 residues long: NAD(P)H-quinone oxidoreductase subunit I, chloroplastic (166 aa).

4Fe-4S ferredoxin-type domains are found at residues 55–84 (GRIHFEFDKCIACEVCVRVCPIDLPVVDWK) and 95–124 (LNYSIDFGICIFCGNCVEYCPTNCLSMTEE). Residues C64, C67, C70, C74, C104, C107, C110, and C114 each coordinate [4Fe-4S] cluster.

This sequence belongs to the complex I 23 kDa subunit family. In terms of assembly, NDH is composed of at least 16 different subunits, 5 of which are encoded in the nucleus. [4Fe-4S] cluster serves as cofactor.

It is found in the plastid. The protein localises to the chloroplast thylakoid membrane. The catalysed reaction is a plastoquinone + NADH + (n+1) H(+)(in) = a plastoquinol + NAD(+) + n H(+)(out). It carries out the reaction a plastoquinone + NADPH + (n+1) H(+)(in) = a plastoquinol + NADP(+) + n H(+)(out). In terms of biological role, NDH shuttles electrons from NAD(P)H:plastoquinone, via FMN and iron-sulfur (Fe-S) centers, to quinones in the photosynthetic chain and possibly in a chloroplast respiratory chain. The immediate electron acceptor for the enzyme in this species is believed to be plastoquinone. Couples the redox reaction to proton translocation, and thus conserves the redox energy in a proton gradient. This Lactuca sativa (Garden lettuce) protein is NAD(P)H-quinone oxidoreductase subunit I, chloroplastic.